The chain runs to 372 residues: 4-hydroxy-3-methylbut-2-en-1-yl diphosphate synthase (flavodoxin) (372 aa).

Cys270, Cys273, Cys305, and Glu312 together coordinate [4Fe-4S] cluster.

The protein belongs to the IspG family. [4Fe-4S] cluster serves as cofactor.

The catalysed reaction is (2E)-4-hydroxy-3-methylbut-2-enyl diphosphate + oxidized [flavodoxin] + H2O + 2 H(+) = 2-C-methyl-D-erythritol 2,4-cyclic diphosphate + reduced [flavodoxin]. It functions in the pathway isoprenoid biosynthesis; isopentenyl diphosphate biosynthesis via DXP pathway; isopentenyl diphosphate from 1-deoxy-D-xylulose 5-phosphate: step 5/6. Its function is as follows. Converts 2C-methyl-D-erythritol 2,4-cyclodiphosphate (ME-2,4cPP) into 1-hydroxy-2-methyl-2-(E)-butenyl 4-diphosphate. The chain is 4-hydroxy-3-methylbut-2-en-1-yl diphosphate synthase (flavodoxin) from Alteromonas mediterranea (strain DSM 17117 / CIP 110805 / LMG 28347 / Deep ecotype).